A 234-amino-acid chain; its full sequence is BTB/POZ domain-containing protein KCTD5 (234 aa).

Residue A2 is modified to N-acetylalanine. Positions 44–146 (KWVRLNVGGT…LVKDKIRERD (103 aa)) constitute a BTB domain. The segment at 213-234 (PYGTTSEPSEKAKILQERGSRM) is disordered. Over residues 220 to 234 (PSEKAKILQERGSRM) the composition is skewed to basic and acidic residues.

As to quaternary structure, homopentamer. Interacts (via C-terminus) with GRASP55/GORASP2. Interacts with CUL3 and with ubiquitinated proteins. Interacts with CRY1.

The protein localises to the cytoplasm. It is found in the cytosol. The protein resides in the nucleus. Its interaction with CUL3 suggests that it may act as a substrate adapter in some E3 ligase complex. Does not affect the function of Kv channel Kv2.1/KCNB1, Kv1.2/KCNA2, Kv4.2/KCND2 and Kv3.4/KCNC4. This chain is BTB/POZ domain-containing protein KCTD5 (Kctd5), found in Rattus norvegicus (Rat).